The sequence spans 275 residues: Small ribosomal subunit protein uS2 (275 aa).

Positions 226–275 are disordered; the sequence is AAAPNSASVREEEFSAEAGDEGKGRRAPAKKATEKKADAPAAAPEAPAAE. Residues 264 to 275 are compositionally biased toward low complexity; that stretch reads APAAAPEAPAAE.

The protein belongs to the universal ribosomal protein uS2 family.

This Xanthomonas campestris pv. campestris (strain ATCC 33913 / DSM 3586 / NCPPB 528 / LMG 568 / P 25) protein is Small ribosomal subunit protein uS2.